We begin with the raw amino-acid sequence, 384 residues long: 5-cytosine rRNA methyltransferase NSUN4 (384 aa).

The transit peptide at Met1–His25 directs the protein to the mitochondrion. S-adenosyl-L-methionine contacts are provided by Gly185, Gly186, Lys187, and Asp204. Ser206 is modified (phosphoserine). Residues Arg209, Asp237, Gly238, and Asp255 each coordinate S-adenosyl-L-methionine. The Nucleophile role is filled by Cys310.

It belongs to the class I-like SAM-binding methyltransferase superfamily. RsmB/NOP family. Heterodimer with MTERFD2/MTERF4; this interaction seems to be required for NSUN4 recruitment to the mitochondrial large ribosomal subunit.

It is found in the mitochondrion. It carries out the reaction a cytidine in rRNA + S-adenosyl-L-methionine = a 5-methylcytidine in rRNA + S-adenosyl-L-homocysteine + H(+). It catalyses the reaction a cytidine in mRNA + S-adenosyl-L-methionine = a 5-methylcytidine in mRNA + S-adenosyl-L-homocysteine + H(+). Mitochondrial RNA cytosine C(5)-methyltransferase that methylates cytosine to 5-methylcytosine (m5C) in various RNAs, such as rRNAs, mRNAs and some long non-coding RNAs (lncRNAs). Involved in mitochondrial ribosome small subunit (SSU) maturation by catalyzing methylation of mitochondrial 12S rRNA; the function is independent of MTERFD2/MTERF4 and assembled mitochondrial ribosome large subunit (LSU). Targeted to LSU by MTERFD2/MTERF4 and probably is involved in a final step in ribosome biogenesis to ensure that SSU and LSU are assembled. In vitro can methylate 16S rRNA of the LSU; the methylation is enhanced by MTERFD/MTERF4. Also acts as a regulator of innate immunity by marking double-stranded mitochondrial RNAs(mt-dsRNAs) generated in response to stress: catalyzes m5C modification on mitochondrial RNAs, such as a mRNAs and lncRNAs, with a preference for the termini of light-strand lncRNAs, promoting their degradation and cytosolic release. Modified light-strand lncRNAs are then recognized by C1QBP reader and recruited to the mitochondrial degradosome complex, which promotes their degradation. In Homo sapiens (Human), this protein is 5-cytosine rRNA methyltransferase NSUN4.